A 147-amino-acid chain; its full sequence is Hemoglobin subunit gamma (147 aa).

The 145-residue stretch at 3–147 (DFTAEEKAAI…VASAVARKYH (145 aa)) folds into the Globin domain. The heme b site is built by histidine 64 and histidine 93.

The protein belongs to the globin family. As to quaternary structure, heterotetramer of two alpha chains and two gamma chains in fetal hemoglobin (Hb F). Red blood cells.

In terms of biological role, gamma chains make up the fetal hemoglobin F, in combination with alpha chains. The chain is Hemoglobin subunit gamma (HBG) from Trichechus manatus (Caribbean manatee).